A 388-amino-acid polypeptide reads, in one-letter code: MKTLIAAYSGVLRGERRAEAARSENKNKGSALSREGSGRWGTGSSILSALQDIFSVTWLNRSKVEKHLQVISVLQWVLSFLVLGVACSVILMYTFCTDCWLIAALYFTWLAFDWNTPKKGGRRSQWVRNWAVWRYFRDYFPIQLVKTHNLLTTRNYIFGYHPHGIMGLGAFCNFSTEATEVSKKFPGIRPYLATLAGNFRMPVLREYLMSGGICPVNRDTIDYLLSKNGSGNAIVIVVGGAAESLSSMPGKNAVTLRNRKGFVKLALRHGADLVPTYSFGENEVYKQVIFEEGSWGRWVQKKFQKYIGFAPCIFHGRGLFSSDTWGLVPYSKPITTVVGEPITVPKLEHPTQKDIDLYHTMYMEALVKLFDNHKTKFGLPETEVLEVN.

The Cytoplasmic segment spans residues 1–69; it reads MKTLIAAYSG…NRSKVEKHLQ (69 aa). A helical transmembrane segment spans residues 70–88; the sequence is VISVLQWVLSFLVLGVACS. The Lumenal portion of the chain corresponds to 89–92; that stretch reads VILM. A helical membrane pass occupies residues 93-112; the sequence is YTFCTDCWLIAALYFTWLAF. The Cytoplasmic portion of the chain corresponds to 113-388; the sequence is DWNTPKKGGR…LPETEVLEVN (276 aa).

The protein belongs to the diacylglycerol acyltransferase family. As to quaternary structure, forms multimeric complexes consisting of several DGAT2 subunits. Interacts with SLC27A1 and this interaction is enhanced in the presence of ZFYVE1.

Its subcellular location is the endoplasmic reticulum membrane. It is found in the lipid droplet. The protein localises to the cytoplasm. It localises to the perinuclear region. The enzyme catalyses an acyl-CoA + a 1,2-diacyl-sn-glycerol = a triacyl-sn-glycerol + CoA. It catalyses the reaction all-trans-retinol + an acyl-CoA = an all-trans-retinyl ester + CoA. It carries out the reaction 2-(9Z-octadecenoyl)-glycerol + (9Z)-octadecenoyl-CoA = 1,2-di-(9Z-octadecenoyl)-sn-glycerol + CoA. The catalysed reaction is 1,2-di-(9Z-octadecenoyl)-sn-glycerol + (9Z)-octadecenoyl-CoA = 1,2,3-tri-(9Z-octadecenoyl)-glycerol + CoA. The enzyme catalyses all-trans-retinol + hexadecanoyl-CoA = all-trans-retinyl hexadecanoate + CoA. It catalyses the reaction 1-O-(9Z-octadecenyl)-glycerol + (9Z)-octadecenoyl-CoA = 1-O-(9Z-octadecyl)-3-(9Z-octadecenoyl)-glycerol + CoA. It carries out the reaction 1-(9Z-octadecenoyl)-glycerol + (9Z)-octadecenoyl-CoA = 1,2-di-(9Z-octadecenoyl)-glycerol + CoA. The catalysed reaction is 1,2-di-(9Z-octadecenoyl)-sn-glycerol + hexadecanoyl-CoA = 1,2-di-(9Z)-octadecenoyl-3-hexadecanoyl-sn-glycerol + CoA. The enzyme catalyses 1,3-di-(9Z-octadecenoyl)-glycerol + (9Z)-octadecenoyl-CoA = 1,2,3-tri-(9Z-octadecenoyl)-glycerol + CoA. It catalyses the reaction 2,3-di-(9Z)-octadecenoyl-sn-glycerol + (9Z)-octadecenoyl-CoA = 1,2,3-tri-(9Z-octadecenoyl)-glycerol + CoA. It carries out the reaction 2-(9Z-octadecenoyl)-glycerol + hexadecanoyl-CoA = 1-hexadecanoyl-2-(9Z-octadecenoyl)-sn-glycerol + CoA. It functions in the pathway glycerolipid metabolism; triacylglycerol biosynthesis. Inhibited by niacin. Functionally, essential acyltransferase that catalyzes the terminal and only committed step in triacylglycerol synthesis by using diacylglycerol and fatty acyl CoA as substrates. Required for synthesis and storage of intracellular triglycerides. Probably plays a central role in cytosolic lipid accumulation. In liver, is primarily responsible for incorporating endogenously synthesized fatty acids into triglycerides. Also functions as an acyl-CoA retinol acyltransferase (ARAT). Also able to use 1-monoalkylglycerol (1-MAkG) as an acyl acceptor for the synthesis of monoalkyl-monoacylglycerol (MAMAG). The sequence is that of Diacylglycerol O-acyltransferase 2 from Rattus norvegicus (Rat).